Here is a 187-residue protein sequence, read N- to C-terminus: UPF0340 protein SPG_0604 (187 aa).

Belongs to the UPF0340 family.

The protein is UPF0340 protein SPG_0604 of Streptococcus pneumoniae serotype 19F (strain G54).